The following is a 261-amino-acid chain: CD40 ligand (261 aa).

Residues 1–22 (MIETYSQPSPRSVATGPPVSMK) lie on the Cytoplasmic side of the membrane. A helical; Signal-anchor for type II membrane protein transmembrane segment spans residues 23-46 (IFMYLLTVFLITQMIGSALFAVYL). The Extracellular segment spans residues 47-261 (HRRLDKIEDE…GFTSFGLLKL (215 aa)). One can recognise a THD domain in the interval 122 to 261 (IAAHVISEAS…GFTSFGLLKL (140 aa)). Cys-178 and Cys-218 are disulfide-bonded. Asn-240 carries an N-linked (GlcNAc...) asparagine glycan.

It belongs to the tumor necrosis factor family. As to quaternary structure, homotrimer. Interacts with CD28. CD40 ligand, soluble form: Exists as either a monomer or a homotrimer. Forms a ternary complex between CD40 and integrins for CD40-CD40LG signaling. Post-translationally, the soluble form derives from the membrane form by proteolytic processing.

Its subcellular location is the cell membrane. It localises to the cell surface. The protein localises to the secreted. Cytokine that acts as a ligand to CD40/TNFRSF5. Costimulates T-cell proliferation and cytokine production. Its cross-linking on T-cells generates a costimulatory signal which enhances the production of IL4 and IL10 in conjunction with the TCR/CD3 ligation and CD28 costimulation. Induces the activation of NF-kappa-B. Induces the activation of kinases MAPK8 and PAK2 in T-cells. Mediates B-cell proliferation in the absence of co-stimulus as well as IgE production in the presence of IL4. Involved in immunoglobulin class switching. Functionally, acts as a ligand for integrins, specifically ITGA5:ITGB1 and ITGAV:ITGB3; both integrins and the CD40 receptor are required for activation of CD40-CD40LG signaling, which have cell-type dependent effects, such as B-cell activation, NF-kappa-B signaling and anti-apoptotic signaling. The sequence is that of CD40 ligand (CD40LG) from Bos taurus (Bovine).